Here is a 190-residue protein sequence, read N- to C-terminus: Shikimate kinase (190 aa).

15 to 20 (GSGKST) serves as a coordination point for ATP. Ser-19 lines the Mg(2+) pocket. Substrate-binding residues include Asp-37, Arg-61, and Gly-83. An ATP-binding site is contributed by Arg-121. Residue Arg-148 participates in substrate binding.

It belongs to the shikimate kinase family. As to quaternary structure, monomer. Mg(2+) is required as a cofactor.

The protein resides in the cytoplasm. It carries out the reaction shikimate + ATP = 3-phosphoshikimate + ADP + H(+). It participates in metabolic intermediate biosynthesis; chorismate biosynthesis; chorismate from D-erythrose 4-phosphate and phosphoenolpyruvate: step 5/7. Functionally, catalyzes the specific phosphorylation of the 3-hydroxyl group of shikimic acid using ATP as a cosubstrate. In Chlorobium chlorochromatii (strain CaD3), this protein is Shikimate kinase.